The primary structure comprises 325 residues: MSKRIYSRIAGTGSYLPEKVLTNDDMSKIVDTSDEWIFSRTGIRERHIAADDQATSDLAYFASLKAMEAAGVTADEIDLIVIGTTTPDLIFPSTACLLQARLGNVGCGAMDVNAACSGFVYALSVADKFVRSGDAKTVLVVGAETLTRILDWTDRTTCVLFGDGAGAVILKADEETGILSTHLRADGSKKELLWDPVGVSVGFGEGKNGGGALLMKGNDVFKYAVKALNSVVDETLAANGYDAHDLDWLIPHQANLRIIEATAKRLDLPMEQVVVTVDRHGNTSSASVPLALDEAVRSGRVQRGQLLLLEAFGGGFAWGSALLRY.

Residues Cys116 and His252 contribute to the active site. The ACP-binding stretch occupies residues 253 to 257 (QANLR). Asn282 is an active-site residue.

The protein belongs to the thiolase-like superfamily. FabH family. As to quaternary structure, homodimer.

It is found in the cytoplasm. The catalysed reaction is malonyl-[ACP] + acetyl-CoA + H(+) = 3-oxobutanoyl-[ACP] + CO2 + CoA. Its pathway is lipid metabolism; fatty acid biosynthesis. Catalyzes the condensation reaction of fatty acid synthesis by the addition to an acyl acceptor of two carbons from malonyl-ACP. Catalyzes the first condensation reaction which initiates fatty acid synthesis and may therefore play a role in governing the total rate of fatty acid production. Possesses both acetoacetyl-ACP synthase and acetyl transacylase activities. Its substrate specificity determines the biosynthesis of branched-chain and/or straight-chain of fatty acids. The sequence is that of Beta-ketoacyl-[acyl-carrier-protein] synthase III from Xanthomonas oryzae pv. oryzae (strain MAFF 311018).